The following is a 379-amino-acid chain: Queuine tRNA-ribosyltransferase (379 aa).

The Proton acceptor role is filled by Asp-91. Substrate is bound by residues 91–95 (DSGGF), Asp-145, Gln-189, and Gly-216. The tract at residues 247–253 (GVGKPED) is RNA binding. Asp-266 (nucleophile) is an active-site residue. The segment at 271-275 (TRNAR) is RNA binding; important for wobble base 34 recognition. Positions 304, 306, 309, and 335 each coordinate Zn(2+).

Belongs to the queuine tRNA-ribosyltransferase family. Homodimer. Within each dimer, one monomer is responsible for RNA recognition and catalysis, while the other monomer binds to the replacement base PreQ1. Requires Zn(2+) as cofactor.

The catalysed reaction is 7-aminomethyl-7-carbaguanine + guanosine(34) in tRNA = 7-aminomethyl-7-carbaguanosine(34) in tRNA + guanine. It functions in the pathway tRNA modification; tRNA-queuosine biosynthesis. In terms of biological role, catalyzes the base-exchange of a guanine (G) residue with the queuine precursor 7-aminomethyl-7-deazaguanine (PreQ1) at position 34 (anticodon wobble position) in tRNAs with GU(N) anticodons (tRNA-Asp, -Asn, -His and -Tyr). Catalysis occurs through a double-displacement mechanism. The nucleophile active site attacks the C1' of nucleotide 34 to detach the guanine base from the RNA, forming a covalent enzyme-RNA intermediate. The proton acceptor active site deprotonates the incoming PreQ1, allowing a nucleophilic attack on the C1' of the ribose to form the product. After dissociation, two additional enzymatic reactions on the tRNA convert PreQ1 to queuine (Q), resulting in the hypermodified nucleoside queuosine (7-(((4,5-cis-dihydroxy-2-cyclopenten-1-yl)amino)methyl)-7-deazaguanosine). The protein is Queuine tRNA-ribosyltransferase of Vibrio cholerae serotype O1 (strain ATCC 39315 / El Tor Inaba N16961).